The primary structure comprises 1114 residues: M-phase phosphoprotein 9 (1114 aa).

Disordered stretches follow at residues 1-55 (MEDF…KTGP), 106-161 (RPSC…DCHV), 183-207 (AKEP…VVQA), 267-301 (TSWA…WKPP), and 410-468 (VLEP…STIP). The span at 24–51 (APQSLGLSLHANRSSPHLSTNGVSSFSG) shows a compositional bias: polar residues. The segment covering 106-119 (RPSCSSSSVSEQVS) has biased composition (low complexity). The segment covering 149 to 161 (QPASSTSYPDCHV) has biased composition (polar residues). Polar residues-rich tracts occupy residues 267–280 (TSWA…QSKQ) and 429–446 (HNPS…TTRA). The required for its centrosomal localization stretch occupies residues 368–729 (LSQVLTLDPG…EAQVKQAEHE (362 aa)). An interaction with CEP97 region spans residues 382 to 431 (KPKEHVAGIQAHGFLHALDDRISFSPDSVLEPSLSRHSDTDSSSQASHNP). A coiled-coil region spans residues 574–733 (DRCGQLDSAL…KQAEHESMLS (160 aa)). Position 710 is a phosphoserine; by TTBK2 (serine 710). Lysine 713 is covalently cross-linked (Glycyl lysine isopeptide (Lys-Gly) (interchain with G-Cter in ubiquitin)). At serine 717 the chain carries Phosphoserine; by TTBK2. Disordered stretches follow at residues 727-755 (EHES…TSDV), 840-931 (SWGT…GFSH), and 975-1002 (EEKK…NGLK). Positions 730-963 (SMLSLRNGAK…PVSTLQQTTA (234 aa)) are interaction with KIF24. The span at 852 to 868 (SKLVNSRQTEPSVNTGR) shows a compositional bias: polar residues. Residues 881 to 898 (QTSASQRSSSLPPSSRKA) are compositionally biased toward low complexity. Residue serine 926 is modified to Phosphoserine. Positions 975 to 985 (EEKKYSEKNSD) are enriched in basic and acidic residues. The stretch at 1040-1105 (RTLAETERFF…GSVRMTLKKF (66 aa)) forms a coiled coil.

Interacts with CCP110, CEP97 and KIF24. Post-translationally, TTBK2-mediated phosphorylation at Ser-710 and Ser-717, promotes its ubiquitination at Lys-713 leading to proteasomal degradation, loss of MPHOSPH9 facilitates the removal of the CP110-CEP97 complex from the mother centrioles, promoting the initiation of ciliogenesis. Phosphorylated in M (mitotic) phase. Ubiquitinated at Lys-713, leading to proteasomal degradation.

The protein localises to the cytoplasm. It localises to the cytoskeleton. Its subcellular location is the microtubule organizing center. It is found in the centrosome. The protein resides in the centriole. The protein localises to the golgi apparatus membrane. In terms of biological role, negatively regulates cilia formation by recruiting the CP110-CEP97 complex (a negative regulator of ciliogenesis) at the distal end of the mother centriole in ciliary cells. At the beginning of cilia formation, MPHOSPH9 undergoes TTBK2-mediated phosphorylation and degradation via the ubiquitin-proteasome system and removes itself and the CP110-CEP97 complex from the distal end of the mother centriole, which subsequently promotes cilia formation. In Mus musculus (Mouse), this protein is M-phase phosphoprotein 9 (Mphosph9).